Consider the following 604-residue polypeptide: Cell division cycle protein CDT1 (604 aa).

This sequence belongs to the Cdt1 family. Associates with the MCM2-7 complex. Interacts with MCM2, ORC1, ORC2 and ORC6.

It is found in the cytoplasm. The protein localises to the nucleus. Functionally, DNA replication licensing factor, required for pre-replication complex assembly. Faithful duplication of the genetic material requires 'once per cell cycle' DNA replication initiation and elongation. Central to this control is the tightly regulated formation of prereplicative complexes (preRCs) at future origins of DNA replication. Required for the recruitment of the MCM2-7 helicase complex to the replication origins. The polypeptide is Cell division cycle protein CDT1 (TAH11) (Saccharomyces cerevisiae (strain ATCC 204508 / S288c) (Baker's yeast)).